The chain runs to 228 residues: ATP synthase F(0) complex subunit a (228 aa).

6 consecutive transmembrane segments (helical) span residues 13–33 (YFLG…TMFI), 70–90 (WALL…TGLL), 100–120 (LSLN…MGAT), 140–160 (APFL…ALGV), 162–182 (LTAN…ALIN), and 190–210 (LFLT…VSFI).

The protein belongs to the ATPase A chain family. Component of the ATP synthase complex composed at least of ATP5F1A/subunit alpha, ATP5F1B/subunit beta, ATP5MC1/subunit c (homooctomer), MT-ATP6/subunit a, MT-ATP8/subunit 8, ATP5ME/subunit e, ATP5MF/subunit f, ATP5MG/subunit g, ATP5MK/subunit k, ATP5MJ/subunit j, ATP5F1C/subunit gamma, ATP5F1D/subunit delta, ATP5F1E/subunit epsilon, ATP5PF/subunit F6, ATP5PB/subunit b, ATP5PD/subunit d, ATP5PO/subunit OSCP. ATP synthase complex consists of a soluble F(1) head domain (subunits alpha(3) and beta(3)) - the catalytic core - and a membrane F(0) domain - the membrane proton channel (subunits c, a, 8, e, f, g, k and j). These two domains are linked by a central stalk (subunits gamma, delta, and epsilon) rotating inside the F1 region and a stationary peripheral stalk (subunits F6, b, d, and OSCP). Interacts with DNAJC30; interaction is direct.

It is found in the mitochondrion inner membrane. The catalysed reaction is H(+)(in) = H(+)(out). Subunit a, of the mitochondrial membrane ATP synthase complex (F(1)F(0) ATP synthase or Complex V) that produces ATP from ADP in the presence of a proton gradient across the membrane which is generated by electron transport complexes of the respiratory chain. ATP synthase complex consist of a soluble F(1) head domain - the catalytic core - and a membrane F(1) domain - the membrane proton channel. These two domains are linked by a central stalk rotating inside the F(1) region and a stationary peripheral stalk. During catalysis, ATP synthesis in the catalytic domain of F(1) is coupled via a rotary mechanism of the central stalk subunits to proton translocation. With the subunit c (ATP5MC1), forms the proton-conducting channel in the F(0) domain, that contains two crucial half-channels (inlet and outlet) that facilitate proton movement from the mitochondrial intermembrane space (IMS) into the matrix. Protons are taken up via the inlet half-channel and released through the outlet half-channel, following a Grotthuss mechanism. The sequence is that of ATP synthase F(0) complex subunit a from Myxine glutinosa (Atlantic hagfish).